Here is a 412-residue protein sequence, read N- to C-terminus: Phosphoglycerate kinase, plasmid (412 aa).

Residues 39–41 (DLN), R55, 78–81 (HLGR), R133, and R166 contribute to the substrate site. ATP is bound by residues K217, E339, and 365–368 (GGDT).

The protein belongs to the phosphoglycerate kinase family. In terms of assembly, monomer.

It localises to the cytoplasm. It catalyses the reaction (2R)-3-phosphoglycerate + ATP = (2R)-3-phospho-glyceroyl phosphate + ADP. The protein operates within carbohydrate biosynthesis; Calvin cycle. The chain is Phosphoglycerate kinase, plasmid (cbbKP) from Cupriavidus necator (strain ATCC 17699 / DSM 428 / KCTC 22496 / NCIMB 10442 / H16 / Stanier 337) (Ralstonia eutropha).